Reading from the N-terminus, the 341-residue chain is Protein huluwa (341 aa).

The Extracellular segment spans residues 1-36; it reads MVTLSPAYLPSDGGTQAASAAPSVEENWVVQPSLTL. The helical transmembrane segment at 37-57 threads the bilayer; sequence LVLLLVPCVLLLFFLNCFLLF. The Cytoplasmic portion of the chain corresponds to 58 to 341; sequence HRLPAFSLRK…PMMCSKQYWI (284 aa). Positions 206–211 match the VPPNSP motif motif; the sequence is VPPNTP.

This sequence belongs to the huluwa family. As to quaternary structure, interacts with axin1; leading to promote the tankyrase-mediated degradation of axin. Interacts with axin2; leading to promote the tankyrase-mediated degradation of axin.

Its subcellular location is the cell membrane. Functionally, key maternal determinant of the dorsal organizer and body axis formation in vertebrates that acts by promoting stabilization of beta-catenin (ctnnb1). Localizes on the plasma membrane of the future dorsal blastomeres in early blastulas and binds to and promotes the tankyrase-mediated degradation of axin (axin1 and axin2). Axin degradation results in stabilization and nuclear translocation of beta-catenin (ctnnb1) for activating organizer-specific target gene expression. In Xenopus laevis (African clawed frog), this protein is Protein huluwa.